The chain runs to 193 residues: Putative RNA methyltransferase At5g10620 (193 aa).

Residues Leu110, Gly142, and 161-166 (LSSMVL) contribute to the S-adenosyl-L-methionine site.

This sequence belongs to the RNA methyltransferase RlmH family.

This Arabidopsis thaliana (Mouse-ear cress) protein is Putative RNA methyltransferase At5g10620.